The primary structure comprises 186 residues: Large ribosomal subunit protein uL10 (186 aa).

Belongs to the universal ribosomal protein uL10 family. In terms of assembly, part of the ribosomal stalk of the 50S ribosomal subunit. The N-terminus interacts with L11 and the large rRNA to form the base of the stalk. The C-terminus forms an elongated spine to which L12 dimers bind in a sequential fashion forming a multimeric L10(L12)X complex.

Functionally, forms part of the ribosomal stalk, playing a central role in the interaction of the ribosome with GTP-bound translation factors. This is Large ribosomal subunit protein uL10 from Nitrosococcus oceani (strain ATCC 19707 / BCRC 17464 / JCM 30415 / NCIMB 11848 / C-107).